The sequence spans 518 residues: Sensor protein kinase HptS (518 aa).

2 consecutive transmembrane segments (helical) span residues 20-40 (IFPV…IYIW) and 222-242 (GITL…FGFI). The region spanning 297–513 (EQLIHSIEHT…LICYKIPLSR (217 aa)) is the Histidine kinase domain. Phosphohistidine; by autocatalysis is present on H325.

Post-translationally, autophosphorylated.

It localises to the cell membrane. The catalysed reaction is ATP + protein L-histidine = ADP + protein N-phospho-L-histidine.. Its function is as follows. Member of the two-component regulatory system HptS/HptR that regulates genes involved in hexose phosphate transport system in response to changes in extracellular phosphate sources. May act as a sensor protein kinase which is autophosphorylated at a histidine residue and transfers its phosphate group to the conserved aspartic acid residue in the regulatory domain of HptS. In turn, HptS antagonizes CcpA-dependent transcription of a subset of CcpA-regulated genes involved in antibiotic susceptibility. The polypeptide is Sensor protein kinase HptS (hptS) (Staphylococcus aureus (strain Mu50 / ATCC 700699)).